The chain runs to 465 residues: ATP synthase subunit beta (465 aa).

152-159 (GGAGVGKT) is an ATP binding site.

It belongs to the ATPase alpha/beta chains family. F-type ATPases have 2 components, CF(1) - the catalytic core - and CF(0) - the membrane proton channel. CF(1) has five subunits: alpha(3), beta(3), gamma(1), delta(1), epsilon(1). CF(0) has three main subunits: a(1), b(2) and c(9-12). The alpha and beta chains form an alternating ring which encloses part of the gamma chain. CF(1) is attached to CF(0) by a central stalk formed by the gamma and epsilon chains, while a peripheral stalk is formed by the delta and b chains.

The protein resides in the cell inner membrane. The enzyme catalyses ATP + H2O + 4 H(+)(in) = ADP + phosphate + 5 H(+)(out). In terms of biological role, produces ATP from ADP in the presence of a proton gradient across the membrane. The catalytic sites are hosted primarily by the beta subunits. This is ATP synthase subunit beta from Campylobacter jejuni subsp. jejuni serotype O:6 (strain 81116 / NCTC 11828).